Reading from the N-terminus, the 208-residue chain is Large ribosomal subunit protein bL25 (208 aa).

It belongs to the bacterial ribosomal protein bL25 family. CTC subfamily. In terms of assembly, part of the 50S ribosomal subunit; part of the 5S rRNA/L5/L18/L25 subcomplex. Contacts the 5S rRNA. Binds to the 5S rRNA independently of L5 and L18.

Its function is as follows. This is one of the proteins that binds to the 5S RNA in the ribosome where it forms part of the central protuberance. The polypeptide is Large ribosomal subunit protein bL25 (Phenylobacterium zucineum (strain HLK1)).